A 336-amino-acid chain; its full sequence is Nuclear envelope-associated protein 1 (336 aa).

A coiled-coil region spans residues 125-261 (CSMLKQQLDD…RRTDQDLKKK (137 aa)). Positions 240 to 261 (KTKELESQLEKQRRTDQDLKKK) match the Bipartite nuclear localization signal motif. Residues 313–330 (FWDNSGFKIVVSMSMLML) form a helical membrane-spanning segment.

Forms heteromers with NEAP2 and NEAP3. Interacts with SUN1; SUN2 and bZIP18.

It is found in the nucleus inner membrane. Its subcellular location is the nucleus. It localises to the nucleoplasm. The protein is Nuclear envelope-associated protein 1 of Arabidopsis thaliana (Mouse-ear cress).